A 188-amino-acid polypeptide reads, in one-letter code: Protein SSX3 (188 aa).

Positions 20–83 (KIQKAFDDIA…KRVTDFQGND (64 aa)) constitute a KRAB-related domain. Residues 113 to 162 (PKKPAEEGNVSKEVPEASGPQNDGKQLCPPGKPTTSEKINMISGPKRGEH) form a disordered region. The segment covering 115-127 (KPAEEGNVSKEVP) has biased composition (basic and acidic residues). Ser-123 is subject to Phosphoserine.

Belongs to the SSX family. In terms of assembly, interacts with SSX2IP.

Its function is as follows. Could act as a modulator of transcription. The protein is Protein SSX3 (SSX3) of Homo sapiens (Human).